The chain runs to 573 residues: Probable D-xylulose kinase A (573 aa).

Substrate-binding residues include histidine 97, arginine 168, aspartate 284, and asparagine 285. Residues tryptophan 366, 471–472 (GG), and asparagine 475 contribute to the ATP site.

This sequence belongs to the FGGY kinase family.

It localises to the cytoplasm. It catalyses the reaction D-xylulose + ATP = D-xylulose 5-phosphate + ADP + H(+). Functionally, highly specific D-xylulose kinase which participates in the catabolism of xylose. Xylose is a major component of hemicelluloses such as xylan. Most fungi utilize D-xylose via three enzymatic reactions, xylose reductase (XR), xylitol dehydrogenase (XDH), and xylulokinase, to form xylulose 5-phosphate, which enters pentose phosphate pathway. This Neosartorya fischeri (strain ATCC 1020 / DSM 3700 / CBS 544.65 / FGSC A1164 / JCM 1740 / NRRL 181 / WB 181) (Aspergillus fischerianus) protein is Probable D-xylulose kinase A (xkiA).